We begin with the raw amino-acid sequence, 269 residues long: Tryptophan synthase alpha chain (269 aa).

Residues E49 and D60 each act as proton acceptor in the active site.

The protein belongs to the TrpA family. As to quaternary structure, tetramer of two alpha and two beta chains.

The enzyme catalyses (1S,2R)-1-C-(indol-3-yl)glycerol 3-phosphate + L-serine = D-glyceraldehyde 3-phosphate + L-tryptophan + H2O. It participates in amino-acid biosynthesis; L-tryptophan biosynthesis; L-tryptophan from chorismate: step 5/5. The alpha subunit is responsible for the aldol cleavage of indoleglycerol phosphate to indole and glyceraldehyde 3-phosphate. This is Tryptophan synthase alpha chain from Pseudomonas putida (strain W619).